The primary structure comprises 1028 residues: Kinesin-like protein KIF28 (1028 aa).

The Kinesin motor domain maps to 11-358 (SVRVAVRVRP…LRYAERAKKV (348 aa)). 114 to 121 (GQTGSGKS) serves as a coordination point for ATP. In terms of domain architecture, FHA spans 460 to 523 (CDVGRAASNA…LQHLDRIILG (64 aa)). The stretch at 873 to 902 (NQVPELYQKLLKLEQETELLRDVNRALRGE) forms a coiled coil.

Belongs to the TRAFAC class myosin-kinesin ATPase superfamily. Kinesin family.

It is found in the mitochondrion membrane. Its function is as follows. Microtubule-dependent motor protein required for mitochondrion morphology and transport of mitochondria in neuronal cells. In Mus musculus (Mouse), this protein is Kinesin-like protein KIF28.